Reading from the N-terminus, the 1100-residue chain is cGMP-inhibited 3',5'-cyclic phosphodiesterase 3B (1100 aa).

Residues 1-11 (MRKDERERDAP) show a composition bias toward basic and acidic residues. The interval 1 to 28 (MRKDERERDAPAMRSPPPPPASAASPPE) is interaction with RAPGEF3. The interval 1–29 (MRKDERERDAPAMRSPPPPPASAASPPES) is disordered. Ser-15 carries the phosphoserine modification. The next 6 helical transmembrane spans lie at 69 to 89 (AGAR…LLGA), 110 to 130 (LSLS…CFLT), 140 to 160 (AGSW…FAAW), 170 to 190 (PAAA…TLAP), 198 to 218 (VLVL…LGAL), and 225 to 245 (LLSC…DHFF). Ser-273 is modified (phosphoserine; by PKB/AKT1 or PKB/AKT2). Phosphoserine occurs at positions 274 and 421. 2 disordered regions span residues 400-423 (RKLH…SSGA) and 570-590 (EPDG…SVFS). The segment covering 408–423 (GRTSFPTPQLRRSSGA) has biased composition (polar residues). The tract at residues 415–439 (PQLRRSSGASSLLTNEHCSRWDRSS) is interaction with PIK3R6. A compositionally biased stretch (basic and acidic residues) spans 573-583 (GTDHPSEKSGE). Positions 627–1061 (PNIDQEVSLD…KIWKEIIEEE (435 aa)) constitute a PDEase domain. His-713 acts as the Proton donor in catalysis. His-713 contributes to the AMP binding site. The Mg(2+) site is built by His-717, His-797, Asp-798, and Asp-913. AMP-binding residues include Asp-798, Asp-913, and Gln-964. Over residues 993-1024 (EEGDDTESDDDDDDDDGDGGEELDSDDEETED) the composition is skewed to acidic residues. The segment at 993-1033 (EEGDDTESDDDDDDDDGDGGEELDSDDEETEDNLNPKPQRR) is disordered. Positions 1044-1079 (MHHLTENHKIWKEIIEEEEEKCKAEGNKLQVDNASL) form a coiled coil.

The protein belongs to the cyclic nucleotide phosphodiesterase family. PDE3 subfamily. Homodimer. Interacts with PIK3CG; regulates PDE3B activity and thereby cAMP levels in cells. Interacts with RAPGEF3 and PIK3R6; form a signaling complex that regulates phosphatidylinositol 3-kinase gamma in angiogenesis. Interacts with ABHD15; this interaction regulates PDE3B's stability and expression and, thereby, impacts the antilipolytic action of insulin. Mg(2+) serves as cofactor. Mn(2+) is required as a cofactor. Phosphorylation at Ser-273 mediates insulin-induced activation of PDE3B. As to expression, abundant in adipose tissues.

The protein localises to the membrane. It carries out the reaction a nucleoside 3',5'-cyclic phosphate + H2O = a nucleoside 5'-phosphate + H(+). The enzyme catalyses 3',5'-cyclic AMP + H2O = AMP + H(+). It catalyses the reaction 3',5'-cyclic GMP + H2O = GMP + H(+). Its activity is regulated as follows. Inhibited by cGMP. In terms of biological role, cyclic nucleotide phosphodiesterase with a dual-specificity for the second messengers cAMP and cGMP, which are key regulators of many important physiological processes. Regulates angiogenesis by inhibiting the cAMP-dependent guanine nucleotide exchange factor RAPGEF3 and downstream phosphatidylinositol 3-kinase gamma-mediated signaling. Controls cardiac contractility by reducing cAMP concentration in cardiocytes. The polypeptide is cGMP-inhibited 3',5'-cyclic phosphodiesterase 3B (Mus musculus (Mouse)).